The primary structure comprises 498 residues: MRINPTTSGSGVSTLEKKNLGNITQIIGPVLDIAFPPGKMPNIYNALVVKDRDTVGQQINVTCEVQQLLGNNRVRAVAMSATDGLTRGMEVIDTGAPLSVPVGGTTLGRIFNVLGEPVDNLGPVDTRTTSPIHRSAPAFIQLDTKLSIFETGIKVVDLLAPYRRGGKIGLFGGAGVGKTVLIMELINNIAKAHGGVSVFGGVGERTRGGNDLYMEMKESGVINEQNIAESKVALVYGQMNEPPGARMRVGLTALTMAEYFRDVNEQDVLLFIDNIFRFVQAGSEVSALLGRMPSAVGYQPTLSTEMGTLQERITSTKEGSITSIQAVYVPADDLTDPAPATTFAHLDATTVLSRGLAAKGIYPAVDPLDSTSTMLQPRIVGEEHYETAQRVKQTLQRYKELQDIIAILGLDELSEEDRLTVARARKIERFLSQPFFVAEVFTGSPGKYVGLAETIRGFQLILSGELDGLPEQAFYLVGNIDEATAKAMNLEMESNLKK.

An ATP-binding site is contributed by 172 to 179 (GGAGVGKT).

This sequence belongs to the ATPase alpha/beta chains family. In terms of assembly, F-type ATPases have 2 components, CF(1) - the catalytic core - and CF(0) - the membrane proton channel. CF(1) has five subunits: alpha(3), beta(3), gamma(1), delta(1), epsilon(1). CF(0) has four main subunits: a(1), b(1), b'(1) and c(9-12).

The protein localises to the plastid. It localises to the chloroplast thylakoid membrane. The enzyme catalyses ATP + H2O + 4 H(+)(in) = ADP + phosphate + 5 H(+)(out). Functionally, produces ATP from ADP in the presence of a proton gradient across the membrane. The catalytic sites are hosted primarily by the beta subunits. The protein is ATP synthase subunit beta, chloroplastic of Panax ginseng (Korean ginseng).